We begin with the raw amino-acid sequence, 466 residues long: Putative chitinase (466 aa).

The first 17 residues, 1–17, serve as a signal peptide directing secretion; it reads MYLTIWLVSILALGTWG. Residues 20–380 form the GH18 domain; it reads FNRFCHYNSW…MAVIHGLNAY (361 aa). C24 and C49 form a disulfide bridge. E141 (proton donor) is an active-site residue. Residues 408–442 are a coiled coil; it reads NYRRRNQQEKVAEMEQRIRHLEQELQQSMGNMAYE.

This sequence belongs to the glycosyl hydrolase 18 family. In terms of tissue distribution, prismatic layer of shell (at protein level). Expressed primarily in the mantle with highest level in the mantle edge and lower level in the mantle pallium.

The protein resides in the secreted. It catalyses the reaction Random endo-hydrolysis of N-acetyl-beta-D-glucosaminide (1-&gt;4)-beta-linkages in chitin and chitodextrins.. This chain is Putative chitinase, found in Pinctada maxima (Silver-lipped pearl oyster).